The following is a 435-amino-acid chain: NADH-quinone oxidoreductase subunit D (435 aa).

The protein belongs to the complex I 49 kDa subunit family. As to quaternary structure, NDH-1 is composed of 14 different subunits. Subunits NuoB, C, D, E, F, and G constitute the peripheral sector of the complex.

It is found in the cell inner membrane. It catalyses the reaction a quinone + NADH + 5 H(+)(in) = a quinol + NAD(+) + 4 H(+)(out). Its function is as follows. NDH-1 shuttles electrons from NADH, via FMN and iron-sulfur (Fe-S) centers, to quinones in the respiratory chain. The immediate electron acceptor for the enzyme in this species is believed to be ubiquinone. Couples the redox reaction to proton translocation (for every two electrons transferred, four hydrogen ions are translocated across the cytoplasmic membrane), and thus conserves the redox energy in a proton gradient. The polypeptide is NADH-quinone oxidoreductase subunit D (Xanthomonas campestris pv. campestris (strain 8004)).